A 312-amino-acid chain; its full sequence is Ribosomal protein L11 methyltransferase (312 aa).

S-adenosyl-L-methionine contacts are provided by threonine 159, glycine 180, aspartate 201, and asparagine 244.

The protein belongs to the methyltransferase superfamily. PrmA family.

It localises to the cytoplasm. The catalysed reaction is L-lysyl-[protein] + 3 S-adenosyl-L-methionine = N(6),N(6),N(6)-trimethyl-L-lysyl-[protein] + 3 S-adenosyl-L-homocysteine + 3 H(+). In terms of biological role, methylates ribosomal protein L11. The sequence is that of Ribosomal protein L11 methyltransferase from Desulfitobacterium hafniense (strain DSM 10664 / DCB-2).